Here is a 538-residue protein sequence, read N- to C-terminus: Mevalonate kinase erg12 (538 aa).

A disordered region spans residues 1–87 (MGNPRGRRTN…RNMSRKPSSP (87 aa)). The span at 9-29 (TNGSIKTSKGTQRGTVSNLLS) shows a compositional bias: polar residues. Positions 57–69 (TTPSTTESTLKTT) are enriched in low complexity. Residues Lys-99, Ser-231, and 236-242 (GAGLGSS) each bind ATP. Mg(2+) is bound by residues Ser-242 and Glu-287. Asp-298 functions as the Proton acceptor in the catalytic mechanism.

The protein belongs to the GHMP kinase family. Mevalonate kinase subfamily. Homodimer. It depends on Mg(2+) as a cofactor.

Its subcellular location is the cytoplasm. The protein localises to the cytosol. The enzyme catalyses (R)-mevalonate + ATP = (R)-5-phosphomevalonate + ADP + H(+). It functions in the pathway isoprenoid biosynthesis; isopentenyl diphosphate biosynthesis via mevalonate pathway; isopentenyl diphosphate from (R)-mevalonate: step 1/3. Mevalonate kinase; part of the second module of ergosterol biosynthesis pathway that includes the middle steps of the pathway. Erg12 converts mevalonate into 5-phosphomevalonate. The second module is carried out in the vacuole and involves the formation of farnesyl diphosphate, which is also an important intermediate in the biosynthesis of ubiquinone, dolichol, heme and prenylated proteins. Activity by the mevalonate kinase erg12 (AFUA_4G07780) first converts mevalonate into 5-phosphomevalonate. 5-phosphomevalonate is then further converted to 5-diphosphomevalonate by the phosphomevalonate kinase erg8 (AFUA_5G10680). The diphosphomevalonate decarboxylase mvd1 (AFUA_4G07130) then produces isopentenyl diphosphate. The isopentenyl-diphosphate delta-isomerase idi1 (AFUA_6G11160) then catalyzes the 1,3-allylic rearrangement of the homoallylic substrate isopentenyl (IPP) to its highly electrophilic allylic isomer, dimethylallyl diphosphate (DMAPP). Finally the farnesyl diphosphate synthase erg20 (AFUA_5G02450) catalyzes the sequential condensation of isopentenyl pyrophosphate with dimethylallyl pyrophosphate, and then with the resultant geranylpyrophosphate to the ultimate product farnesyl pyrophosphate. The chain is Mevalonate kinase erg12 from Aspergillus fumigatus (strain ATCC MYA-4609 / CBS 101355 / FGSC A1100 / Af293) (Neosartorya fumigata).